The chain runs to 232 residues: Probable intron-encoded endonuclease aI3 (232 aa).

The protein belongs to the LAGLIDADG endonuclease family.

The protein resides in the mitochondrion. Mitochondrial DNA endonuclease involved in intron homing. The protein is Probable intron-encoded endonuclease aI3 (aI3) of Dictyostelium discoideum (Social amoeba).